The chain runs to 290 residues: 4-hydroxy-tetrahydrodipicolinate synthase (290 aa).

Thr44 is a pyruvate binding site. Tyr132 (proton donor/acceptor) is an active-site residue. Catalysis depends on Lys160, which acts as the Schiff-base intermediate with substrate. Ile202 lines the pyruvate pocket.

It belongs to the DapA family. As to quaternary structure, homotetramer; dimer of dimers.

The protein localises to the cytoplasm. It carries out the reaction L-aspartate 4-semialdehyde + pyruvate = (2S,4S)-4-hydroxy-2,3,4,5-tetrahydrodipicolinate + H2O + H(+). It functions in the pathway amino-acid biosynthesis; L-lysine biosynthesis via DAP pathway; (S)-tetrahydrodipicolinate from L-aspartate: step 3/4. In terms of biological role, catalyzes the condensation of (S)-aspartate-beta-semialdehyde [(S)-ASA] and pyruvate to 4-hydroxy-tetrahydrodipicolinate (HTPA). The polypeptide is 4-hydroxy-tetrahydrodipicolinate synthase (Pelobacter propionicus (strain DSM 2379 / NBRC 103807 / OttBd1)).